We begin with the raw amino-acid sequence, 394 residues long: Elongation factor Tu (394 aa).

Positions 10–204 (KPHVNVGTIG…HLDSYIPEPE (195 aa)) constitute a tr-type G domain. Residues 19–26 (GHVDHGKT) form a G1 region. 19–26 (GHVDHGKT) is a binding site for GTP. T26 serves as a coordination point for Mg(2+). The segment at 60 to 64 (GITIN) is G2. The interval 81–84 (DCPG) is G3. GTP is bound by residues 81-85 (DCPGH) and 136-139 (NKCD). Positions 136-139 (NKCD) are G4. The interval 174–176 (SAL) is G5.

This sequence belongs to the TRAFAC class translation factor GTPase superfamily. Classic translation factor GTPase family. EF-Tu/EF-1A subfamily. As to quaternary structure, monomer.

The protein localises to the cytoplasm. The enzyme catalyses GTP + H2O = GDP + phosphate + H(+). Functionally, GTP hydrolase that promotes the GTP-dependent binding of aminoacyl-tRNA to the A-site of ribosomes during protein biosynthesis. The protein is Elongation factor Tu of Cronobacter sakazakii (strain ATCC BAA-894) (Enterobacter sakazakii).